The chain runs to 447 residues: Na(+)-translocating NADH-quinone reductase subunit A (447 aa).

It belongs to the NqrA family. Composed of six subunits; NqrA, NqrB, NqrC, NqrD, NqrE and NqrF.

The enzyme catalyses a ubiquinone + n Na(+)(in) + NADH + H(+) = a ubiquinol + n Na(+)(out) + NAD(+). NQR complex catalyzes the reduction of ubiquinone-1 to ubiquinol by two successive reactions, coupled with the transport of Na(+) ions from the cytoplasm to the periplasm. NqrA to NqrE are probably involved in the second step, the conversion of ubisemiquinone to ubiquinol. The sequence is that of Na(+)-translocating NADH-quinone reductase subunit A from Neisseria gonorrhoeae (strain NCCP11945).